A 254-amino-acid polypeptide reads, in one-letter code: NH(3)-dependent NAD(+) synthetase (254 aa).

29–36 serves as a coordination point for ATP; that stretch reads GLSGGIDS. Aspartate 35 is a Mg(2+) binding site. Arginine 115 is a binding site for deamido-NAD(+). Threonine 135 is an ATP binding site. Glutamate 140 contributes to the Mg(2+) binding site. Positions 148 and 155 each coordinate deamido-NAD(+). Residues lysine 164 and serine 186 each coordinate ATP. 245–246 lines the deamido-NAD(+) pocket; it reads HK.

This sequence belongs to the NAD synthetase family. Homodimer.

The catalysed reaction is deamido-NAD(+) + NH4(+) + ATP = AMP + diphosphate + NAD(+) + H(+). Its pathway is cofactor biosynthesis; NAD(+) biosynthesis; NAD(+) from deamido-NAD(+) (ammonia route): step 1/1. Catalyzes the ATP-dependent amidation of deamido-NAD to form NAD. Uses ammonia as a nitrogen source. The chain is NH(3)-dependent NAD(+) synthetase from Methanococcus aeolicus (strain ATCC BAA-1280 / DSM 17508 / OCM 812 / Nankai-3).